Reading from the N-terminus, the 269-residue chain is Intron-associated endonuclease 3 (269 aa).

This endonuclease is specific to the nrdB gene splice junction and is involved in intron homing. The protein is Intron-associated endonuclease 3 (ITEVIIIR) of Enterobacteria phage RB3 (Bacteriophage RB3).